Consider the following 156-residue polypeptide: Transcriptional regulator MraZ (156 aa).

SpoVT-AbrB domains are found at residues 7 to 54 (NIEV…PESV) and 84 to 127 (VEVV…AKER).

The protein belongs to the MraZ family. As to quaternary structure, forms oligomers.

The protein localises to the cytoplasm. The protein resides in the nucleoid. This Bacteroides thetaiotaomicron (strain ATCC 29148 / DSM 2079 / JCM 5827 / CCUG 10774 / NCTC 10582 / VPI-5482 / E50) protein is Transcriptional regulator MraZ.